The following is a 344-amino-acid chain: UDP-N-acetylenolpyruvoylglucosamine reductase (344 aa).

The region spanning 19–189 is the FAD-binding PCMH-type domain; the sequence is INVTAKKIIF…IAVGIKIKKN (171 aa). Arginine 165 is a catalytic residue. The Proton donor role is filled by serine 235. Glutamate 331 is an active-site residue.

The protein belongs to the MurB family. Requires FAD as cofactor.

It localises to the cytoplasm. The enzyme catalyses UDP-N-acetyl-alpha-D-muramate + NADP(+) = UDP-N-acetyl-3-O-(1-carboxyvinyl)-alpha-D-glucosamine + NADPH + H(+). It functions in the pathway cell wall biogenesis; peptidoglycan biosynthesis. Cell wall formation. The protein is UDP-N-acetylenolpyruvoylglucosamine reductase of Buchnera aphidicola subsp. Schizaphis graminum (strain Sg).